We begin with the raw amino-acid sequence, 474 residues long: Sensor protein CreC (474 aa).

Over 1–6 (MRIGMR) the chain is Periplasmic. The helical transmembrane segment at 7-27 (LLLGYFLLVAVAAWFVLAIFV) threads the bilayer. Residues 28–146 (KEVKPGVRRA…LQNPADPESS (119 aa)) are Cytoplasmic-facing. The chain crosses the membrane as a helical span at residues 147-167 (VMYVAAPIMDGSRLIGVLSVG). At 168–183 (KPNAAMAPVIKRSERR) the chain is on the periplasmic side. Residues 184 to 204 (ILWASAILLGIALVIGAGMVW) form a helical membrane-spanning segment. Residues 205–255 (WINRSIARLTRYADSVTDNKPVPLPDLGSSELRKLAQALESMRVKLEGKNY) enclose the HAMP domain. Over 205–474 (WINRSIARLT…ASLRLHRHFT (270 aa)) the chain is Cytoplasmic. The Histidine kinase domain maps to 262-473 (ALTHELKSPL…LASLRLHRHF (212 aa)). His-265 bears the Phosphohistidine; by autocatalysis mark.

Post-translationally, autophosphorylated.

Its subcellular location is the cell inner membrane. The enzyme catalyses ATP + protein L-histidine = ADP + protein N-phospho-L-histidine.. Functionally, member of the two-component regulatory system CreC/CreB involved in catabolic regulation. CreC may function as a membrane-associated protein kinase that phosphorylates CreB in response to environmental signals. CreC can also phosphorylate PhoB. This Escherichia coli (strain K12) protein is Sensor protein CreC (creC).